The primary structure comprises 436 residues: UDP-N-acetylmuramate--L-alanine ligase (436 aa).

Residue 111–117 (GTHGKTS) coordinates ATP.

Belongs to the MurCDEF family.

The protein resides in the cytoplasm. It carries out the reaction UDP-N-acetyl-alpha-D-muramate + L-alanine + ATP = UDP-N-acetyl-alpha-D-muramoyl-L-alanine + ADP + phosphate + H(+). The protein operates within cell wall biogenesis; peptidoglycan biosynthesis. Cell wall formation. This chain is UDP-N-acetylmuramate--L-alanine ligase, found in Lactiplantibacillus plantarum (strain ATCC BAA-793 / NCIMB 8826 / WCFS1) (Lactobacillus plantarum).